A 361-amino-acid chain; its full sequence is 3-dehydroquinate synthase (361 aa).

Belongs to the archaeal-type DHQ synthase family.

The catalysed reaction is 2-amino-2,3,7-trideoxy-D-lyxo-hept-6-ulosonate + NAD(+) + H2O = 3-dehydroquinate + NH4(+) + NADH + H(+). Its function is as follows. Catalyzes the oxidative deamination and cyclization of 2-amino-3,7-dideoxy-D-threo-hept-6-ulosonic acid (ADH) to yield 3-dehydroquinate (DHQ), which is fed into the canonical shikimic pathway of aromatic amino acid biosynthesis. The protein is 3-dehydroquinate synthase of Methanococcus maripaludis (strain C7 / ATCC BAA-1331).